The following is a 58-amino-acid chain: ATP synthase F(0) complex subunit k, mitochondrial (58 aa).

N6-acetyllysine is present on residues lysine 16 and lysine 17. A helical transmembrane segment spans residues threonine 23–phenylalanine 45.

Component of the ATP synthase complex composed at least of ATP5F1A/subunit alpha, ATP5F1B/subunit beta, ATP5MC1/subunit c (homooctomer), MT-ATP6/subunit a, MT-ATP8/subunit 8, ATP5ME/subunit e, ATP5MF/subunit f, ATP5MG/subunit g, ATP5MK/subunit k, ATP5MJ/subunit j, ATP5F1C/subunit gamma, ATP5F1D/subunit delta, ATP5F1E/subunit epsilon, ATP5PF/subunit F6, ATP5PB/subunit b, ATP5PD/subunit d, ATP5PO/subunit OSCP. ATP synthase complex consists of a soluble F(1) head domain (subunits alpha(3) and beta(3)) - the catalytic core - and a membrane F(0) domain - the membrane proton channel (subunits c, a, 8, e, f, g, k and j). These two domains are linked by a central stalk (subunits gamma, delta, and epsilon) rotating inside the F1 region and a stationary peripheral stalk (subunits F6, b, d, and OSCP). The ATP synthase complex/complex V exists as a monomeric and a dimeric supercomplex that helps shape mitochondrial cristae to optimize proton flow. Ubiquitous. Highly expressed in skeletal and cardiac muscle. Moderately expressed in brain, thymus, stomach and testis. Lowest expression levels were detected in lung, liver, kidney, adrenal gland, spleen, small intestine and adipose tissue. In streptozotocin-induced diabetes, the insulin-sensitive tissues skeletal and cardiac muscle were down-regulated.

The protein localises to the mitochondrion membrane. Functionally, subunit k, of the mitochondrial membrane ATP synthase complex (F(1)F(0) ATP synthase or Complex V) that produces ATP from ADP in the presence of a proton gradient across the membrane which is generated by electron transport complexes of the respiratory chain. ATP synthase complex consist of a soluble F(1) head domain - the catalytic core - and a membrane F(1) domain - the membrane proton channel. These two domains are linked by a central stalk rotating inside the F(1) region and a stationary peripheral stalk. During catalysis, ATP synthesis in the catalytic domain of F(1) is coupled via a rotary mechanism of the central stalk subunits to proton translocation. In vivo, can only synthesize ATP although its ATP hydrolase activity can be activated artificially in vitro. Part of the complex F(0) domain. Required for dimerization of the ATP synthase complex and as such regulates ATP synthesis in the mitochondria. This chain is ATP synthase F(0) complex subunit k, mitochondrial (Atp5mk), found in Rattus norvegicus (Rat).